Here is a 218-residue protein sequence, read N- to C-terminus: MKQPAPVYQRIAGHQWRHIWLSGDIHGCLEQLRRKLWHCRFDPWRDLLISVGDVIDRGPQSLRCLQLLEQHWVCAVRGNHEQMAMDALASQQMSLWLMNGGDWFIALADNQQKQAKTALEKCQHLPFILEVHSRTGKHVIAHADYPDDVYEWQKDVDLHQVLWSRSRLGERQKGQGITGADHFWFGHTPLRHRVDIGNLHYIDTGAVFGGELTLVQLQ.

Residues D24, H26, D53, and N79 each coordinate Mn(2+). H80 (proton donor) is an active-site residue. Residue H187 coordinates Mn(2+).

The protein belongs to the PPP phosphatase family. PP-1 subfamily. The cofactor is Mn(2+).

The enzyme catalyses O-phospho-L-seryl-[protein] + H2O = L-seryl-[protein] + phosphate. It carries out the reaction O-phospho-L-threonyl-[protein] + H2O = L-threonyl-[protein] + phosphate. Its function is as follows. Plays a key role in signaling protein misfolding via the CpxR/CPXA transducing system. It also modulates the phosphorylated status of many phosphoproteins in E.coli, some of which acting as major chaperones. Has been shown, in vitro, to act on Ser, Thr and Tyr-phosphorylated substrates. This is Serine/threonine-protein phosphatase 1 (pphA) from Escherichia coli (strain K12).